The sequence spans 370 residues: Binary larvicide subunit BinA (370 aa).

Positions 1-6 are excised as a propeptide; the sequence is MRNLDF. A beta-trefoil domain region spans residues 1–155; that stretch reads MRNLDFIDSF…LISNKEQIYL (155 aa). An intrachain disulfide couples Cys-31 to Cys-47. Positions 156 to 370 are pore-forming domain; sequence TLPSLPENEQ…NTKIITDDQN (215 aa).

It belongs to the toxin_10 family. As to quaternary structure, forms a heterodimer with BinB. Post-translationally, processed by proteases in the mosquito gut, probably at both the N- and C-termini.

It is found in the spore. The protein localises to the perispore. Functionally, component of a binary toxin active against Culex and some Aedes mosquito larvae. The individual subunits are not toxic. BinAB binds to the gastric caecum and posterior midgut of C.quinquefasciatus larvae; this subunit alone binds the entire larval gut. Binary toxin internalization into host gut cells requires both proteins. Toxic to Aedes atropalpus mosquito larvae; mortality towards both C.quinquefasciatus and A.atropalpus is maximal by 48 hours. A.aegypti is not very susceptible to this toxin. This is Binary larvicide subunit BinA (binA) from Lysinibacillus sphaericus (Bacillus sphaericus).